Here is an 843-residue protein sequence, read N- to C-terminus: Protein P (843 aa).

The terminal protein domain (TP) stretch occupies residues 1–177; the sequence is MPLSYQHFRK…FCGSPYSWEQ (177 aa). Positions 178 to 346 are spacer; it reads ELQHGRLVFQ…YCLSHLINLH (169 aa). Disordered stretches follow at residues 218-243 and 291-315; these read LKQSRLGLQPQQGSLARGKSGRSGSI and TAQRHSPSGHAVEFHSIPPSSAGSQ. A polymerase/reverse transcriptase domain (RT) region spans residues 347 to 690; the sequence is EDWGPCIEHG…YLNLYPVARQ (344 aa). Residues 357–600 form the Reverse transcriptase domain; that stretch reads EHNIRIPRTP…YSLNFMGYVI (244 aa). Positions 429, 551, and 552 each coordinate Mg(2+).

Belongs to the hepadnaviridae P protein family.

It catalyses the reaction DNA(n) + a 2'-deoxyribonucleoside 5'-triphosphate = DNA(n+1) + diphosphate. It carries out the reaction Endonucleolytic cleavage to 5'-phosphomonoester.. Its activity is regulated as follows. Activated by host HSP70 and HSP40 in vitro to be able to bind the epsilon loop of the pgRNA. Because deletion of the RNase H region renders the protein partly chaperone-independent, the chaperones may be needed indirectly to relieve occlusion of the RNA-binding site by this domain. Inhibited by several reverse-transcriptase inhibitors: Lamivudine, Adefovir and Entecavir. Functionally, multifunctional enzyme that converts the viral RNA genome into dsDNA in viral cytoplasmic capsids. This enzyme displays a DNA polymerase activity that can copy either DNA or RNA templates, and a ribonuclease H (RNase H) activity that cleaves the RNA strand of RNA-DNA heteroduplexes in a partially processive 3'- to 5'-endonucleasic mode. Neo-synthesized pregenomic RNA (pgRNA) are encapsidated together with the P protein, and reverse-transcribed inside the nucleocapsid. Initiation of reverse-transcription occurs first by binding the epsilon loop on the pgRNA genome, and is initiated by protein priming, thereby the 5'-end of (-)DNA is covalently linked to P protein. Partial (+)DNA is synthesized from the (-)DNA template and generates the relaxed circular DNA (RC-DNA) genome. After budding and infection, the RC-DNA migrates in the nucleus, and is converted into a plasmid-like covalently closed circular DNA (cccDNA). The activity of P protein does not seem to be necessary for cccDNA generation, and is presumably released from (+)DNA by host nuclear DNA repair machinery. This chain is Protein P, found in Hepatitis B virus genotype C subtype ayw (isolate Australia/AustRC/1992) (HBV-C).